The primary structure comprises 274 residues: 2,3,4,5-tetrahydropyridine-2,6-dicarboxylate N-succinyltransferase (274 aa).

Substrate is bound by residues R106 and D143.

This sequence belongs to the transferase hexapeptide repeat family. In terms of assembly, homotrimer.

Its subcellular location is the cytoplasm. It carries out the reaction (S)-2,3,4,5-tetrahydrodipicolinate + succinyl-CoA + H2O = (S)-2-succinylamino-6-oxoheptanedioate + CoA. The protein operates within amino-acid biosynthesis; L-lysine biosynthesis via DAP pathway; LL-2,6-diaminopimelate from (S)-tetrahydrodipicolinate (succinylase route): step 1/3. This is 2,3,4,5-tetrahydropyridine-2,6-dicarboxylate N-succinyltransferase from Herminiimonas arsenicoxydans.